Consider the following 848-residue polypeptide: Transforming growth factor beta receptor type 3 (848 aa).

The first 20 residues, 1–20 (MTLHCVVALFALISSCLATA), serve as a signal peptide directing secretion. The Extracellular portion of the chain corresponds to 21-784 (GPEPGVQCAL…IFHGLDTLTV (764 aa)). N-linked (GlcNAc...) asparagine glycosylation is found at Asn-34 and Asn-141. A disulfide bridge links Cys-52 with Cys-197. The segment at 390–448 (SGEGAARHGGLPFPFPYIPRRGRQDGGKDRLPRPKDPVVPSIQLLPGPREPQEAQGSRD) is disordered. The segment covering 411-425 (GRQDGGKDRLPRPKD) has biased composition (basic and acidic residues). Residues 454–729 (RCDSEKMLVA…PKCVLPDEAC (276 aa)) form the ZP domain. An N-linked (GlcNAc...) asparagine glycan is attached at Asn-491. O-linked (Xyl...) (glycosaminoglycan) serine glycosylation is found at Ser-529, Ser-533, and Ser-544. N-linked (GlcNAc...) asparagine glycans are attached at residues Asn-570, Asn-589, and Asn-696. 3 disulfides stabilise this stretch: Cys-638–Cys-704, Cys-659–Cys-729, and Cys-709–Cys-722. Positions 736–750 (MIWAMMQNKKTFTKP) are interaction with TGF-beta ligand. The chain crosses the membrane as a helical span at residues 785 to 806 (MGIAFAAFVIGALLTGALWYIY). At 807 to 848 (SHTGDSAGRQPVPTSPPASENSSAAHSLGSTQSTPCSSSSAA) the chain is on the cytoplasmic side. Residues 813-848 (AGRQPVPTSPPASENSSAAHSLGSTQSTPCSSSSAA) form a disordered region. Positions 833 to 848 (SLGSTQSTPCSSSSAA) are enriched in low complexity. Thr-837 carries the phosphothreonine modification.

In terms of assembly, forms homodimers and homooligomers. Interacts with DYNLT4. Interacts with integrin ITGA5:ITGB1; this interaction promotes the internalization and trafficking of ITGA5:ITGB1 into endocytic vesicles. Interacts with TGFB1, BMP2, BMP5, BMP7 or GDF5 and inhibin A via the ligand binding domains. Interacts with ALK3/BMPR1A; this interaction results in the cell surface retention of BMPR1A. Interacts with ALK6/BMPR1B; this interaction enhances BMPR1B-mediated stimulation of the BMP signaling pathway. Interacts with the scaffolding protein beta-arrestin2/ARRB2; this interaction mediates internalization of TGFBR3 and thus regulates migration, actin cytoskeleton and activation of CDC42. Extensively modified by glycosaminoglycan groups (GAG). In terms of processing, phosphorylated in the cytoplasmic domain by the type II receptor TGFBR2 at THR-837 to mediate recruitment of ARRB2 and subsequent internalization of TGFBR2 and TGFBR3.

The protein localises to the cell membrane. It is found in the secreted. Its subcellular location is the extracellular space. The protein resides in the extracellular matrix. Its function is as follows. Cell surface receptor that regulates diverse cellular processes including cell proliferation, differentiation, migration, and apoptosis. Initiates BMP, inhibin, and TGF-beta signaling pathways by interacting with different ligands including TGFB1, BMP2, BMP5, BMP7 or GDF5. Alternatively, acts as a cell surface coreceptor for BMP ligands, serving to enhance ligand binding by differentially regulating BMPR1A/ALK3 and BMPR1B/ALK6 receptor trafficking. Promotes epithelial cell adhesion, focal adhesion formation and integrin signaling during epithelial cell spreading on fibronectin. By interacting with the scaffolding protein beta-arrestin2/ARRB2, regulates migration or actin cytoskeleton and promotes the activation of CDC42 as well as the inhibition of NF-kappa-B. In gonadotrope cells, acts as an inhibin A coreceptor and regulates follicle-stimulating hormone (FSH) levels and female fertility. Plays a role in the inhibition of directed and random cell migration in epithelial cells by altering the actin cytoskeletal organization. Participates in epithelial-mesenchymal transformation (EMT) upon binding to BMP2 or TGFB2, by activating the PAR6/SMURF1/RHOA pathway. This Sus scrofa (Pig) protein is Transforming growth factor beta receptor type 3 (TGFBR3).